The following is a 474-amino-acid chain: Stabilizer of axonemal microtubules 1 (474 aa).

Mn stretches follow at residues Lys30–Ile64, Pro65–Glu97, Asn98–Asn131, Lys132–Val165, Arg166–Ile199, Pro200–Ile232, Pro233–Met266, Pro267–Asp299, Ser300–Gly332, Arg333–Glu366, Pro367–Val400, and Pro401–Glu434. The segment at Pro318–Met350 is disordered. A disordered region spans residues Lys444–Ala474. A compositionally biased stretch (polar residues) spans Gln448–Leu457.

This sequence belongs to the FAM154 family. In terms of assembly, associates with microtubules via the Mn regions.

It is found in the cytoplasm. It localises to the cytoskeleton. Its subcellular location is the microtubule organizing center. The protein resides in the centrosome. The protein localises to the centriole. It is found in the cilium basal body. It localises to the cilium axoneme. Its subcellular location is the flagellum axoneme. May play a role in the regulation of cilium length. Stabilizes microtubules at low temperature. The polypeptide is Stabilizer of axonemal microtubules 1 (SAXO1) (Macaca fascicularis (Crab-eating macaque)).